The primary structure comprises 396 residues: Apolipoprotein A-IV (396 aa).

An N-terminal signal peptide occupies residues 1–20 (MFLKAVVLTLALVAVAGARA). Repeat copies occupy residues 33–54 (DYFSQLSNNAKEAVEHLQKSEL), 60–81 (ALFQDKLGEVNTYAGDLQKKLV), 82–103 (PFATELHERLAKDSEKLKEEIG), 115–136 (PHANEVSQKIGDNLRELQQRLE), 137–158 (PYADQLRTQVSTQAEQLRRQLT), 159–180 (PYAQRMERVLRENADSLQASLR), 181–202 (PHADELKAKIDQNVEELKGRLT), 203–224 (PYADEFKVKIDQTVEELRRSLA), 225–246 (PYAQDTQEKLNHQLEGLTFQMK), 247–268 (KNAEELKARISASAEELRQRLA), 269–286 (PLAEDVRGNLRGNTEGLQ), 287–308 (KSLAELGGHLDQQVEEFRRRVE), and 309–330 (PYGENFNKALVQQMEQLRQKLG). The tract at residues 33-330 (DYFSQLSNNA…QMEQLRQKLG (298 aa)) is 13 X 22 AA approximate tandem repeats. The disordered stretch occupies residues 361–396 (KESQDKTLSLPELEQQQEQQQEQQQEQVQMLAPLES). Positions 374 to 389 (EQQQEQQQEQQQEQVQ) are enriched in low complexity.

This sequence belongs to the apolipoprotein A1/A4/E family. In terms of assembly, homodimer. Post-translationally, phosphorylation sites are present in the extracellular medium. As to expression, synthesized primarily in the intestine and secreted in plasma.

Its subcellular location is the secreted. May have a role in chylomicrons and VLDL secretion and catabolism. Required for efficient activation of lipoprotein lipase by ApoC-II; potent activator of LCAT. Apoa-IV is a major component of HDL and chylomicrons. The protein is Apolipoprotein A-IV of Homo sapiens (Human).